Here is a 239-residue protein sequence, read N- to C-terminus: MFLFPAIDLKDGACVRLKLGLMEESTVFNTDPGAQARDFAAAGAEWIHVVDLNGAFAGKPVNGAAVDSILKSVSVPVQLGGGIREMATIEDWLARGIRRVILGTVALKNPALVKEACQRFPGRVAVGIDAKGGKVAVEGWAETSDLTVLELARKFEDCGVAALIYTDIDRDGVLAGPNVAATAALADAISIPVIASGGVSSLVDLKALKAYPKLEGVISGRAIYDGRIDVAQAIALLKA.

Catalysis depends on Asp8, which acts as the Proton acceptor. The active-site Proton donor is the Asp129.

The protein belongs to the HisA/HisF family.

Its subcellular location is the cytoplasm. The catalysed reaction is 1-(5-phospho-beta-D-ribosyl)-5-[(5-phospho-beta-D-ribosylamino)methylideneamino]imidazole-4-carboxamide = 5-[(5-phospho-1-deoxy-D-ribulos-1-ylimino)methylamino]-1-(5-phospho-beta-D-ribosyl)imidazole-4-carboxamide. It functions in the pathway amino-acid biosynthesis; L-histidine biosynthesis; L-histidine from 5-phospho-alpha-D-ribose 1-diphosphate: step 4/9. In Paramagnetospirillum magneticum (strain ATCC 700264 / AMB-1) (Magnetospirillum magneticum), this protein is 1-(5-phosphoribosyl)-5-[(5-phosphoribosylamino)methylideneamino] imidazole-4-carboxamide isomerase.